The primary structure comprises 59 residues: Metallothionein-1B (59 aa).

A beta region spans residues 1-29 (MPGPCCNDKCVCQEGGCKAGCQCTSCRCS). A divalent metal cation contacts are provided by Cys5, Cys6, Cys10, Cys17, Cys21, Cys23, Cys26, Cys28, Cys31, Cys34, Cys38, Cys40, Cys46, Cys50, Cys54, Cys56, and Cys57. The segment at 30–59 (PCQKCTSGCKCATKEECSKTCTKPCSCCPK) is alpha.

The protein belongs to the metallothionein superfamily. Type 3 family.

Binds six divalent metal ions. Known to bind copper and cadmium. This chain is Metallothionein-1B, found in Callinectes sapidus (Blue crab).